Reading from the N-terminus, the 406-residue chain is Phosphopentomutase (406 aa).

Residues D10, D305, H310, D346, H347, and H358 each coordinate Mn(2+).

It belongs to the phosphopentomutase family. Mn(2+) is required as a cofactor.

The protein localises to the cytoplasm. The catalysed reaction is 2-deoxy-alpha-D-ribose 1-phosphate = 2-deoxy-D-ribose 5-phosphate. It catalyses the reaction alpha-D-ribose 1-phosphate = D-ribose 5-phosphate. It participates in carbohydrate degradation; 2-deoxy-D-ribose 1-phosphate degradation; D-glyceraldehyde 3-phosphate and acetaldehyde from 2-deoxy-alpha-D-ribose 1-phosphate: step 1/2. In terms of biological role, isomerase that catalyzes the conversion of deoxy-ribose 1-phosphate (dRib-1-P) and ribose 1-phosphate (Rib-1-P) to deoxy-ribose 5-phosphate (dRib-5-P) and ribose 5-phosphate (Rib-5-P), respectively. The sequence is that of Phosphopentomutase from Agrobacterium fabrum (strain C58 / ATCC 33970) (Agrobacterium tumefaciens (strain C58)).